We begin with the raw amino-acid sequence, 446 residues long: Delta(8)-fatty-acid desaturase (446 aa).

A Cytochrome b5 heme-binding domain is found at Lys5–Ser89. 2 residues coordinate heme: His40 and His63. The next 2 helical transmembrane spans lie at Val112–Cys132 and Leu136–Leu156. Positions His158–His162 match the Histidine box-1 motif. 4 consecutive transmembrane segments (helical) span residues Phe174–His195, Ile253–Phe273, Ala282–Leu302, and Val309–Asn329. The short motif at His195–His199 is the Histidine box-2 element. Residues Gln372–His376 carry the Histidine box-3 motif.

The protein belongs to the fatty acid desaturase type 1 family. The cofactor is Fe cation. In terms of tissue distribution, expressed only in young leaves.

It localises to the membrane. It carries out the reaction an N-acyl-(4R)-4-hydroxysphinganine + 2 Fe(II)-[cytochrome b5] + O2 + 2 H(+) = a (4R,8E)-4-hydroxysphingenine ceramide + 2 Fe(III)-[cytochrome b5] + 2 H2O. The enzyme catalyses an N-acyl-(4R)-4-hydroxysphinganine + 2 Fe(II)-[cytochrome b5] + O2 + 2 H(+) = a (4R,8Z)-4-hydroxysphing-8-enine ceramide + 2 Fe(III)-[cytochrome b5] + 2 H2O. Plays a major role as delta(8)-fatty-acid desaturase which introduces a double bond at the 8-position in the long-chain base (LCB) of ceramides with or without a hydroxy group at the 4-position. The enzyme produces both the 8E and 8Z isomers (in a 4:1 ratio). This structural modification contributes to the quantitative partitioning of ceramides between the two major sphingolipid classes, glucosylceramides and glycosylinositolphosphoryl ceramides. Sphingolipids are important membrane components involved in environmental stress responses, such as resistance to chilling, and act as cell signaling molecules. This is Delta(8)-fatty-acid desaturase (sld1) from Borago officinalis (Bourrache).